Here is a 287-residue protein sequence, read N- to C-terminus: MSVVANPLHPLFAAGVEDIDLREALGSTEVREIERLMDEKSVLVFRGQPLSQDQQIAFARNFGPLEGGFIKVNQRPSRFKYAELADISNVSLDGKVAQRDAREVVGNFANQLWHSDSSFQQPAARYSMLSAVVVPPSGGDTEFCDMRAAYDALPRDLQSELEGLRAEHYALNSRFLLGDTDYSEAQRNAMPPVNWPLVRTHAGSGRKFLFIGAHASHVEGLPVAEGRMLLAELLEHATQREFVYRHRWNVGDLVMWDNRCVLHRGRRYDISARRELRRATTLDDAVV.

Tryptophan 113 bears the 3-hydroxytryptophan; by autocatalysis mark. Positions 114 and 116 each coordinate Fe cation. Positions 141 and 248 each coordinate 2-oxoglutarate. Histidine 263 contributes to the Fe cation binding site. 2-oxoglutarate-binding residues include arginine 274 and arginine 278.

This sequence belongs to the TfdA dioxygenase family. The cofactor is Fe(2+). Post-translationally, hydroxylated on Trp-113; inactivates the enzyme.

The enzyme catalyses (2,4-dichlorophenoxy)acetate + 2-oxoglutarate + O2 = 2,4-dichlorophenol + glyoxylate + succinate + CO2. Its pathway is xenobiotic degradation; (2,4-dichlorophenoxy)acetate degradation. Its activity is regulated as follows. Activated by ascorbate. Involved in degradation of the herbicide 2,4-dichlorophenoxyacetic acid (2,4-D). Is also able to degrade 2-methyl-4-chlorophenoxyacetic acid and 3-chlorobenzoic acid. The polypeptide is Alpha-ketoglutarate-dependent 2,4-dichlorophenoxyacetate dioxygenase (tfdA) (Cupriavidus pinatubonensis (strain JMP 134 / LMG 1197) (Cupriavidus necator (strain JMP 134))).